We begin with the raw amino-acid sequence, 422 residues long: Glutamyl-tRNA reductase (422 aa).

Substrate contacts are provided by residues 50–53 (TCNR), serine 110, 115–117 (ETQ), and glutamine 121. Cysteine 51 serves as the catalytic Nucleophile. 190–195 (GAGEMS) is a binding site for NADP(+).

The protein belongs to the glutamyl-tRNA reductase family. As to quaternary structure, homodimer.

It carries out the reaction (S)-4-amino-5-oxopentanoate + tRNA(Glu) + NADP(+) = L-glutamyl-tRNA(Glu) + NADPH + H(+). It participates in porphyrin-containing compound metabolism; protoporphyrin-IX biosynthesis; 5-aminolevulinate from L-glutamyl-tRNA(Glu): step 1/2. In terms of biological role, catalyzes the NADPH-dependent reduction of glutamyl-tRNA(Glu) to glutamate 1-semialdehyde (GSA). In Campylobacter fetus subsp. fetus (strain 82-40), this protein is Glutamyl-tRNA reductase.